The chain runs to 643 residues: Aspartic protease 3 (643 aa).

The signal sequence occupies residues 1–31 (MEGRTTAGRATPAGFWLFSCCLASVLWSANA). Positions 87 to 99 (APEVSGAAGASAS) are enriched in low complexity. Residues 87–116 (APEVSGAAGASASKTSEKPIRPYHTGPSSR) form a disordered region. The region spanning 281 to 600 (YVGVIGIGTP…GTRPSLVGIA (320 aa)) is the Peptidase A1 domain. Catalysis depends on residues Asp-299 and Asp-490.

This sequence belongs to the peptidase A1 family.

It is found in the endomembrane system. Its activity is regulated as follows. Inhibited by 49c, a hydroxyethylamine scaffold-based compound. In terms of biological role, required for the processing-mediated maturation of a subset of microneme proteins, such as MIC6, and rhoptry proteins, such as ROP1. By regulating microneme and rhoptry processing, plays an essential role in the lysis of the host cell membrane during egress and in rhoptry content discharge, which is required for invasion of host cells. The chain is Aspartic protease 3 from Toxoplasma gondii.